The chain runs to 301 residues: Protoheme IX farnesyltransferase (301 aa).

8 helical membrane-spanning segments follow: residues 25-45 (VTQLAVFCAVIGMFLSTPGMV), 47-67 (WTPLIGGTVGIWLLAGAAFAI), 97-117 (ILLFSAVLGGLGMWTLYTFAN), 119-139 (LTMWLTLATFVGYAVIYTLLL), 147-167 (IVIGGASGAMPPALGWAAVTG), 173-193 (AWILVLIIFVWTPPHFWALAL), 235-255 (FISGMSGVVYLAAAVLLGALF), and 279-299 (IVYLSLLFAALLIDHYARVLI).

This sequence belongs to the UbiA prenyltransferase family. Protoheme IX farnesyltransferase subfamily.

The protein localises to the cell inner membrane. The enzyme catalyses heme b + (2E,6E)-farnesyl diphosphate + H2O = Fe(II)-heme o + diphosphate. Its pathway is porphyrin-containing compound metabolism; heme O biosynthesis; heme O from protoheme: step 1/1. In terms of biological role, converts heme B (protoheme IX) to heme O by substitution of the vinyl group on carbon 2 of heme B porphyrin ring with a hydroxyethyl farnesyl side group. In Paraburkholderia xenovorans (strain LB400), this protein is Protoheme IX farnesyltransferase.